We begin with the raw amino-acid sequence, 380 residues long: Cytochrome b (380 aa).

4 consecutive transmembrane segments (helical) span residues 34–54, 78–99, 114–134, and 179–199; these read FGSLLTICLLTQILTGLLLAM, WLIRNLHANGASFFFICIYLHI, WNTGVILLLTLMATAFVGYVL, and FFALHFLLPFMIVGLSMIHLT. Heme b contacts are provided by histidine 84 and histidine 98. Histidine 183 and histidine 197 together coordinate heme b. Residue histidine 202 coordinates a ubiquinone. Transmembrane regions (helical) follow at residues 227-247, 289-309, 321-341, and 348-368; these read LKDILGFILMLLPLTTLALFS, LGGVLALAASVLILFLAPFLH, ISQLLFWILVANLLILTWVGS, and FIIIGQLASITYFTILLILFP.

The protein belongs to the cytochrome b family. The cytochrome bc1 complex contains 11 subunits: 3 respiratory subunits (MT-CYB, CYC1 and UQCRFS1), 2 core proteins (UQCRC1 and UQCRC2) and 6 low-molecular weight proteins (UQCRH/QCR6, UQCRB/QCR7, UQCRQ/QCR8, UQCR10/QCR9, UQCR11/QCR10 and a cleavage product of UQCRFS1). This cytochrome bc1 complex then forms a dimer. The cofactor is heme b.

The protein localises to the mitochondrion inner membrane. Functionally, component of the ubiquinol-cytochrome c reductase complex (complex III or cytochrome b-c1 complex) that is part of the mitochondrial respiratory chain. The b-c1 complex mediates electron transfer from ubiquinol to cytochrome c. Contributes to the generation of a proton gradient across the mitochondrial membrane that is then used for ATP synthesis. The protein is Cytochrome b (MT-CYB) of Pelecanoides garnotii (Peruvian diving petrel).